The following is a 231-amino-acid chain: Urease accessory protein UreF (231 aa).

The protein belongs to the UreF family. In terms of assembly, ureD, UreF and UreG form a complex that acts as a GTP-hydrolysis-dependent molecular chaperone, activating the urease apoprotein by helping to assemble the nickel containing metallocenter of UreC. The UreE protein probably delivers the nickel.

The protein localises to the cytoplasm. In terms of biological role, required for maturation of urease via the functional incorporation of the urease nickel metallocenter. The sequence is that of Urease accessory protein UreF from Marinobacter nauticus (strain ATCC 700491 / DSM 11845 / VT8) (Marinobacter aquaeolei).